A 906-amino-acid polypeptide reads, in one-letter code: Protein translocase subunit SecA (906 aa).

ATP contacts are provided by residues Gln86, 104–108 (GEGKT), and Asp499. The segment at 862–886 (KPVVSRIDPKDRNPDDPTSWGRVSR) is disordered. Residues Cys890, Cys892, Cys901, and His902 each contribute to the Zn(2+) site.

It belongs to the SecA family. As to quaternary structure, monomer and homodimer. Part of the essential Sec protein translocation apparatus which comprises SecA, SecYEG and auxiliary proteins SecDF-YajC and YidC. Requires Zn(2+) as cofactor.

The protein resides in the cell inner membrane. Its subcellular location is the cytoplasm. The enzyme catalyses ATP + H2O + cellular proteinSide 1 = ADP + phosphate + cellular proteinSide 2.. In terms of biological role, part of the Sec protein translocase complex. Interacts with the SecYEG preprotein conducting channel. Has a central role in coupling the hydrolysis of ATP to the transfer of proteins into and across the cell membrane, serving both as a receptor for the preprotein-SecB complex and as an ATP-driven molecular motor driving the stepwise translocation of polypeptide chains across the membrane. The polypeptide is Protein translocase subunit SecA (Rickettsia africae (strain ESF-5)).